The chain runs to 797 residues: Calcium-transporting ATPase CtpE (797 aa).

Transmembrane regions (helical) follow at residues 55–75 (LLLIVLATGSLINGMFGLLII), 215–235 (ILQFITYLLVPAGLLTIYTQL), and 254–274 (VPMVPEGLVLMTSIAFAVGVV). D301 acts as the 4-aspartylphosphate intermediate in catalysis. Mg(2+) is bound by residues D301, T303, and D536. 6 helical membrane-spanning segments follow: residues 601 to 621 (TVYSVLLALLVGIECLIAIPL), 633 to 653 (IHVTIAAWFTIGIPAFILSLA), 667 to 687 (VMTSAVPFGLVIGVATFVTYL), 703 to 723 (ASTAALITLLMTALWVLAVIA), 729 to 749 (WRLALVLASGLAYVVIFSLPL), and 764 to 784 (TSIALAVGVVGAATIEAMWWI).

It belongs to the cation transport ATPase (P-type) (TC 3.A.3) family.

The protein localises to the cell membrane. The catalysed reaction is Ca(2+)(in) + ATP + H2O = Ca(2+)(out) + ADP + phosphate + H(+). P-type ATPase involved in specific uptake of calcium. This chain is Calcium-transporting ATPase CtpE (ctpE), found in Mycobacterium bovis (strain ATCC BAA-935 / AF2122/97).